The chain runs to 194 residues: Molybdenum cofactor guanylyltransferase (194 aa).

GTP is bound by residues 12 to 14 (LAG), Lys25, Asn53, Asp71, and Asp101. Asp101 is a binding site for Mg(2+).

This sequence belongs to the MobA family. Monomer. It depends on Mg(2+) as a cofactor.

It localises to the cytoplasm. It carries out the reaction Mo-molybdopterin + GTP + H(+) = Mo-molybdopterin guanine dinucleotide + diphosphate. Functionally, transfers a GMP moiety from GTP to Mo-molybdopterin (Mo-MPT) cofactor (Moco or molybdenum cofactor) to form Mo-molybdopterin guanine dinucleotide (Mo-MGD) cofactor. This is Molybdenum cofactor guanylyltransferase from Escherichia coli O6:H1 (strain CFT073 / ATCC 700928 / UPEC).